A 1016-amino-acid polypeptide reads, in one-letter code: DENN domain-containing protein 1A (1016 aa).

The uDENN domain occupies 13-145; sequence FEVYVEVAYP…HRLPIPDPGV (133 aa). The region spanning 162–298 is the cDENN domain; sequence ELPSIPENRN…VISSLKNRLK (137 aa). Residues 300–378 form the dDENN domain; that stretch reads VSTTTGDGVA…DGRLDLLNSG (79 aa). An FXDXF motif motif is present at residues 381–385; sequence FSDVF. A disordered region spans residues 453–565; it reads DITENGCVSS…GPTPAPPDRA (113 aa). S473 bears the Phosphoserine mark. The span at 479 to 489 shows a compositional bias: basic and acidic residues; the sequence is QDPRLREDRRP. The segment covering 500-509 has biased composition (basic residues); sequence PRPHVVRRPK. Residue T519 is modified to Phosphothreonine. 6 positions are modified to phosphoserine: S520, S522, S523, S536, S538, and S546. Residues 569 to 578 carry the Clathrin box motif; it reads DLLEDVFSSL. S592 carries the post-translational modification Phosphoserine. Residues 681 to 737 are disordered; it reads LSPSIKEETPIPTPGSITIPRPQGRKTPELGIVPPPPTARPAKLQAAGGPLGDFSSE. S750 carries the post-translational modification Phosphoserine. An Omega-N-methylarginine modification is found at R760. 2 disordered regions span residues 763-783 and 935-1016; these read PQGP…AGTG and SARA…ETFE. A compositionally biased stretch (pro residues) spans 954-970; sequence LLPPRPPQSLQPTPQPS. Basic and acidic residues-rich tracts occupy residues 977-988 and 1007-1016; these read DPFEDLLRKTKQ and QLRRQWETFE.

Interacts with RAB35. Interacts with clathrin and with the adapter protein complex 2, AP-2. Interacts with ITSN1 and SH3GL2. Interacts (when phosphorylated) with YWHAE. In terms of processing, phosphorylated on serine and/or threonine in an Akt-dependent manner. Phosphorylation probably regulates the guanine nucleotide exchange factor (GEF) activity, possibly by disrupting an intramolecular interaction between the DENN domain and the C-terminus of the protein, thereby relieving the autoinhibition.

The protein resides in the cytoplasmic vesicle. The protein localises to the clathrin-coated vesicle membrane. It is found in the presynaptic cell membrane. Its activity is regulated as follows. The guanine nucleotide exchange factor (GEF) activity is autoinhibited. Autoinhibition may be the result of intramolecular interaction between the DENN domain and the C-terminus, which is disrupted upon phosphorylation. Activation is regulated by Akt activation. Its function is as follows. Guanine nucleotide exchange factor (GEF) regulating clathrin-mediated endocytosis through RAB35 activation. Promotes the exchange of GDP to GTP, converting inactive GDP-bound RAB35 into its active GTP-bound form. Regulates clathrin-mediated endocytosis of synaptic vesicles and mediates exit from early endosomes. Binds phosphatidylinositol-phosphates (PtdInsPs), with some preference for PtdIns(3)P. This chain is DENN domain-containing protein 1A (Dennd1a), found in Mus musculus (Mouse).